Consider the following 289-residue polypeptide: Acetyl-coenzyme A carboxylase carboxyl transferase subunit beta (289 aa).

The CoA carboxyltransferase N-terminal domain maps to 28-289; the sequence is VMTKCPKCKK…QGGEMAVWQS (262 aa). Zn(2+) contacts are provided by Cys32, Cys35, Cys51, and Cys54. The segment at 32–54 adopts a C4-type zinc-finger fold; it reads CPKCKKIMYTKEVLKNLKVCVNC.

Belongs to the AccD/PCCB family. In terms of assembly, acetyl-CoA carboxylase is a heterohexamer composed of biotin carboxyl carrier protein (AccB), biotin carboxylase (AccC) and two subunits each of ACCase subunit alpha (AccA) and ACCase subunit beta (AccD). It depends on Zn(2+) as a cofactor.

The protein localises to the cytoplasm. The enzyme catalyses N(6)-carboxybiotinyl-L-lysyl-[protein] + acetyl-CoA = N(6)-biotinyl-L-lysyl-[protein] + malonyl-CoA. The protein operates within lipid metabolism; malonyl-CoA biosynthesis; malonyl-CoA from acetyl-CoA: step 1/1. Functionally, component of the acetyl coenzyme A carboxylase (ACC) complex. Biotin carboxylase (BC) catalyzes the carboxylation of biotin on its carrier protein (BCCP) and then the CO(2) group is transferred by the transcarboxylase to acetyl-CoA to form malonyl-CoA. This Bacillus thuringiensis (strain Al Hakam) protein is Acetyl-coenzyme A carboxylase carboxyl transferase subunit beta.